Here is a 158-residue protein sequence, read N- to C-terminus: ATP synthase subunit b' (158 aa).

Residues 24–44 form a helical membrane-spanning segment; it reads ATLPLMAVQILVLVFLLNAVF.

It belongs to the ATPase B chain family. As to quaternary structure, F-type ATPases have 2 components, F(1) - the catalytic core - and F(0) - the membrane proton channel. F(1) has five subunits: alpha(3), beta(3), gamma(1), delta(1), epsilon(1). F(0) has four main subunits: a(1), b(1), b'(1) and c(10-14). The alpha and beta chains form an alternating ring which encloses part of the gamma chain. F(1) is attached to F(0) by a central stalk formed by the gamma and epsilon chains, while a peripheral stalk is formed by the delta, b and b' chains.

It is found in the cellular thylakoid membrane. In terms of biological role, f(1)F(0) ATP synthase produces ATP from ADP in the presence of a proton or sodium gradient. F-type ATPases consist of two structural domains, F(1) containing the extramembraneous catalytic core and F(0) containing the membrane proton channel, linked together by a central stalk and a peripheral stalk. During catalysis, ATP synthesis in the catalytic domain of F(1) is coupled via a rotary mechanism of the central stalk subunits to proton translocation. Its function is as follows. Component of the F(0) channel, it forms part of the peripheral stalk, linking F(1) to F(0). The b'-subunit is a diverged and duplicated form of b found in plants and photosynthetic bacteria. The chain is ATP synthase subunit b' from Synechococcus elongatus (strain ATCC 33912 / PCC 7942 / FACHB-805) (Anacystis nidulans R2).